The primary structure comprises 230 residues: Demethylmenaquinone methyltransferase (230 aa).

S-adenosyl-L-methionine is bound by residues Thr62, Asp80, 102–103 (DG), and Ser119.

Belongs to the class I-like SAM-binding methyltransferase superfamily. MenG/UbiE family.

The catalysed reaction is a 2-demethylmenaquinol + S-adenosyl-L-methionine = a menaquinol + S-adenosyl-L-homocysteine + H(+). It functions in the pathway quinol/quinone metabolism; menaquinone biosynthesis; menaquinol from 1,4-dihydroxy-2-naphthoate: step 2/2. Functionally, methyltransferase required for the conversion of demethylmenaquinol (DMKH2) to menaquinol (MKH2). In Streptomyces griseus subsp. griseus (strain JCM 4626 / CBS 651.72 / NBRC 13350 / KCC S-0626 / ISP 5235), this protein is Demethylmenaquinone methyltransferase.